The primary structure comprises 2027 residues: Dedicator of cytokinesis protein 3 (2027 aa).

Residues 6-67 (EEEKYGVVIC…PANYIHLKKA (62 aa)) form the SH3 domain. Residues 421-598 (RNDLYLTLEK…ESFFISTQLS (178 aa)) form the C2 DOCK-type domain. Residues 1225–1632 (KSEINKEEMY…LYHEFPGLDK (408 aa)) enclose the DOCKER domain. Ser-1655 bears the Phosphoserine mark. 4 disordered regions span residues 1672 to 1695 (GTGR…MMMM), 1731 to 1768 (SSSQ…SLPD), 1846 to 1925 (DTPP…DEGL), and 1971 to 2027 (PPKP…RGEQ). Composition is skewed to low complexity over residues 1676-1695 (HSSS…MMMM) and 1731-1751 (SSSQ…APSQ). A compositionally biased stretch (polar residues) spans 1752–1763 (MITSAPSSTRGS). Residues 1877–1899 (GSNSTLSGSASSGVSSLSESNFG) are compositionally biased toward low complexity. Positions 1967-1973 (PPALPPK) match the SH3-binding motif. 2 stretches are compositionally biased toward basic and acidic residues: residues 1981–1998 (ALEH…ERPR) and 2011–2027 (VKEE…RGEQ).

It belongs to the DOCK family. Interacts with presenilin proteins PSEN1 and PSEN2. Interacts with CRK. As to expression, expressed in brain, spinal cord, pituitary gland, testis. Not expressed in heart, liver, kidney, spleen and lung. In brain, it is highly expressed in the cerebral cortex and hippocampus, while it is absent in other tissues, except in spinal cord. In the cerebral cortex, it is found within the intermediate (III and IV) and deep (V and VI) layers, whereas it is weakly expressed in superficial layer I. It is also abundant in the piriform cortex. Within the hippocampus, it is expressed in the pyramidal neurons of the CA1, CA2, and CA3 regions and the dentate gyrus.

Its subcellular location is the cytoplasm. In terms of biological role, potential guanine nucleotide exchange factor (GEF). GEF proteins activate some small GTPases by exchanging bound GDP for free GTP. Its interaction with presenilin proteins as well as its ability to stimulate Tau/MAPT phosphorylation suggest that it may be involved in Alzheimer disease. Ectopic expression in nerve cells decreases the secretion of amyloid-beta APBA1 protein and lowers the rate of cell-substratum adhesion, suggesting that it may affect the function of some small GTPase involved in the regulation of actin cytoskeleton or cell adhesion receptors. The protein is Dedicator of cytokinesis protein 3 (Dock3) of Mus musculus (Mouse).